The sequence spans 391 residues: Aspartic protease 17 (391 aa).

A signal peptide spans M1–A15. Residues Y65–A385 form the Peptidase A1 domain. N-linked (GlcNAc...) asparagine glycosylation is present at N68. D83 is a catalytic residue. N108 carries an N-linked (GlcNAc...) asparagine glycan. Residue D274 is part of the active site. C309 and C345 are joined by a disulfide.

The protein belongs to the peptidase A1 family. As to expression, expressed in intestinal cells.

The protein resides in the secreted. In terms of biological role, aspartic proteinase. This Caenorhabditis elegans protein is Aspartic protease 17.